Here is a 280-residue protein sequence, read N- to C-terminus: Merozoite surface protein 2 (280 aa).

Residues 1–20 form the signal peptide; sequence MKVIKTLSIINFFIFVTFNI. N-linked (GlcNAc...) asparagine glycans are attached at residues N22 and N36. Residues 44–206 are polymorphic region; the sequence is ANEGSNTKSV…PQTAENENPA (163 aa). A disordered region spans residues 47–242; that stretch reads GSNTKSVGAN…SQKECTDGNK (196 aa). Residues 51–74 form a 5 X 12 AA tandem repeats of P-P-I-T-T-T-E-S-N-S-R-S region; the sequence is KSVGANAPKADTIASGSQSSTNSA. The segment covering 64–98 has biased composition (low complexity); sequence ASGSQSSTNSASTSTTNNGESQTTTPTAADTPTAT. A compositionally biased stretch (polar residues) spans 99–149; it reads ESNSRSPPITTTESNSRSPPITTTESNSRSPPITTTESNSRSPPITTTESN. Repeat copies occupy residues 105–116, 117–128, 129–140, and 141–152. Residues 150–163 are compositionally biased toward low complexity; sequence SRSPPITTTESSSS. One copy of the 5; partial repeat lies at 153–160; sequence PPITTTES. Residue N168 is glycosylated (N-linked (GlcNAc...) asparagine). Residues 170-182 show a composition bias toward basic and acidic residues; that stretch reads TDGKGEESEKQNE. N-linked (GlcNAc...) asparagine glycosylation is found at N184 and N229. Residues 233 to 242 show a composition bias toward basic and acidic residues; sequence SQKECTDGNK. A disulfide bridge links C237 with C245. N-linked (GlcNAc...) asparagine glycans are attached at residues N253 and N254. N254 carries GPI-anchor amidated asparagine lipidation. A propeptide spans 255–280 (removed in mature form); that stretch reads SSNIASINKFVVLISATLVLSFAIFI.

Its subcellular location is the cell membrane. May play a role in the merozoite attachment to the erythrocyte. In Plasmodium falciparum (isolate K1 / Thailand), this protein is Merozoite surface protein 2.